Consider the following 513-residue polypeptide: Aspartyl protease family protein 1 (513 aa).

A signal peptide spans 1–21 (MVWYSSCRILFLGLLILLASS). Positions 104–445 (HYANVTVGTP…DREKLILGWK (342 aa)) constitute a Peptidase A1 domain. Catalysis depends on residues D122 and D327. Residues 452-488 (GETSARTLPSNRSSSSARPPASSFDPEATNIPSQRPN) are disordered. Residues 455-474 (SARTLPSNRSSSSARPPASS) are compositionally biased toward low complexity. The GPI-anchor amidated serine moiety is linked to residue S484. A propeptide spans 485–513 (QRPNTSTTSAAYSLSISLSLFFFSILAIL) (removed in mature form).

The protein belongs to the peptidase A1 family.

It localises to the cell membrane. Its function is as follows. Aspartyl protease. Not able to cleave BAG6. This Arabidopsis thaliana (Mouse-ear cress) protein is Aspartyl protease family protein 1.